A 274-amino-acid chain; its full sequence is MNFTDMLRAATARHGSLLCVGLDPEPARFPAGMQGDARKIYDFCAAVVDATADLVCAFKPQIAYFAAHGAEAQLERLMQHMRSNAPQVPVILDAKRGDIGATAEQYAKEAFERYGADAVTLSPFMGFDSIAPYLAYRGKGAFLLCRTSNPGGDDLQNQRLASVAGQPLLYEHLASLAQGPWNRNGQLGLVVGATYPQEIERVRSLAPTLPLLIPGVGAQGGDAAAAVRAGLRSDAPIIVNSSRTILYAGAGADFAGAARAQALRMRALLQAARR.

The active-site Proton donor is Lys-95.

The protein belongs to the OMP decarboxylase family. Type 2 subfamily.

It carries out the reaction orotidine 5'-phosphate + H(+) = UMP + CO2. Its pathway is pyrimidine metabolism; UMP biosynthesis via de novo pathway; UMP from orotate: step 2/2. In Verminephrobacter eiseniae (strain EF01-2), this protein is Orotidine 5'-phosphate decarboxylase.